Consider the following 63-residue polypeptide: Hyphancin-3G (63 aa).

The first 22 residues, 1 to 22 (MNFSRILFFMFACFVALASVSA), serve as a signal peptide directing secretion. Residues 23–26 (VPEP) constitute a propeptide, removed by a dipeptidylpeptidase. L61 is subject to Leucine amide.

The protein belongs to the cecropin family.

The protein resides in the secreted. Has antibacterial activity. The protein is Hyphancin-3G of Hyphantria cunea (Fall webworm moth).